The chain runs to 203 residues: Holliday junction branch migration complex subunit RuvA (203 aa).

Residues 1–64 (MIGRLRGIIL…EDAQLLYGFN (64 aa)) form a domain I region. Positions 65-142 (NKQERTLFKE…KGLHGDLFTP (78 aa)) are domain II. The tract at residues 143–154 (AVDLVLTSPASP) is flexible linker. A domain III region spans residues 155-203 (TSEDAEQEAVAALVALGYKPQEASRMVSKIARPDASSETLIRDALRAAL).

It belongs to the RuvA family. Homotetramer. Forms an RuvA(8)-RuvB(12)-Holliday junction (HJ) complex. HJ DNA is sandwiched between 2 RuvA tetramers; dsDNA enters through RuvA and exits via RuvB. An RuvB hexamer assembles on each DNA strand where it exits the tetramer. Each RuvB hexamer is contacted by two RuvA subunits (via domain III) on 2 adjacent RuvB subunits; this complex drives branch migration. In the full resolvosome a probable DNA-RuvA(4)-RuvB(12)-RuvC(2) complex forms which resolves the HJ.

It is found in the cytoplasm. In terms of biological role, the RuvA-RuvB-RuvC complex processes Holliday junction (HJ) DNA during genetic recombination and DNA repair, while the RuvA-RuvB complex plays an important role in the rescue of blocked DNA replication forks via replication fork reversal (RFR). RuvA specifically binds to HJ cruciform DNA, conferring on it an open structure. The RuvB hexamer acts as an ATP-dependent pump, pulling dsDNA into and through the RuvAB complex. HJ branch migration allows RuvC to scan DNA until it finds its consensus sequence, where it cleaves and resolves the cruciform DNA. This Salmonella agona (strain SL483) protein is Holliday junction branch migration complex subunit RuvA.